Consider the following 287-residue polypeptide: Type 1 encapsulin shell protein EncA (287 aa).

The protein belongs to the encapsulin family. Family 1 subfamily. The 32 nm encapsulin nanocompartment is formed by 180 subunits; monomers form pentamers which assemble to form shells. There are 36 pores where the pentamers meet as well as 3-fold axis channels and dimer channels. The N-terminus of the protein is inside the shell.

It localises to the encapsulin nanocompartment. Functionally, shell component of a type 1, iron-storage encapsulin nanocompartment. Encapsulin nanocompartments are 32 nm in diameter with an iron- and phosphorus-rich core (4Fe:1P) about 24 nm in diameter. Upon expression in E.coli most particles are 32 nm, 20% are 18 nm. The core is filled with an average of 14 dense granules, 5-6 nm in diameter that are not evenly distributed. Each nanocompartment is estimated to hold 30,000-35,000 Fe atoms. The minor proteins EncB, EncC and EncD probably lie against the interior face of the nanocompartment. The protein is Type 1 encapsulin shell protein EncA of Myxococcus xanthus (strain DK1622).